We begin with the raw amino-acid sequence, 465 residues long: Protein dml1 (465 aa).

Serine 446 carries the post-translational modification Phosphoserine.

The protein belongs to the misato family.

It localises to the mitochondrion. In terms of biological role, involved in the partitioning of the mitochondrial organelle and mitochondrial DNA (mtDNA) inheritance. This is Protein dml1 (dml1) from Schizosaccharomyces pombe (strain 972 / ATCC 24843) (Fission yeast).